Consider the following 369-residue polypeptide: Putative FAD-dependent monooxygenase YetM (369 aa).

The N-terminal stretch at 1–32 is a signal peptide; that stretch reads MKHMLIAGGGIGGLSAAISLRKAGFSVTLCEA. FAD-binding positions include Gly12, 31–32, Val126, and Asp285; that span reads EA.

FAD serves as cofactor.

The polypeptide is Putative FAD-dependent monooxygenase YetM (yetM) (Bacillus subtilis (strain 168)).